We begin with the raw amino-acid sequence, 238 residues long: Ribonuclease PH (238 aa).

Phosphate-binding positions include Arg86 and 124–126 (GTR).

This sequence belongs to the RNase PH family. As to quaternary structure, homohexameric ring arranged as a trimer of dimers.

It catalyses the reaction tRNA(n+1) + phosphate = tRNA(n) + a ribonucleoside 5'-diphosphate. Phosphorolytic 3'-5' exoribonuclease that plays an important role in tRNA 3'-end maturation. Removes nucleotide residues following the 3'-CCA terminus of tRNAs; can also add nucleotides to the ends of RNA molecules by using nucleoside diphosphates as substrates, but this may not be physiologically important. Probably plays a role in initiation of 16S rRNA degradation (leading to ribosome degradation) during starvation. The sequence is that of Ribonuclease PH from Shigella boydii serotype 18 (strain CDC 3083-94 / BS512).